An 82-amino-acid chain; its full sequence is Defensin-like protein 156 (82 aa).

Positions 1–27 are cleaved as a signal peptide; it reads MAKISCSYFLVLMLVFSVFSLVEKTKG. Disulfide bonds link Cys31/Cys77, Cys41/Cys60, Cys46/Cys71, and Cys50/Cys73.

Belongs to the DEFL family. As to expression, expressed in flower buds, but not in stems, roots or rosette leaves.

Its subcellular location is the secreted. This Arabidopsis thaliana (Mouse-ear cress) protein is Defensin-like protein 156 (LCR21).